The chain runs to 176 residues: NAD(P)H-quinone oxidoreductase subunit 6, chloroplastic (176 aa).

The next 5 helical transmembrane spans lie at 10 to 30 (FILVFLGSGLILGSLGVVFFT), 32 to 52 (TIFSAFSLGLVLVCVSLFYIL), 63 to 83 (LLIYVGAINVLIIFAVMFMNG), 92 to 112 (VWTVGDGITLMVCTSIFISQI), and 152 to 172 (FFLPFELISIILLVALIGAIF).

It belongs to the complex I subunit 6 family. In terms of assembly, NDH is composed of at least 16 different subunits, 5 of which are encoded in the nucleus.

Its subcellular location is the plastid. It is found in the chloroplast thylakoid membrane. The enzyme catalyses a plastoquinone + NADH + (n+1) H(+)(in) = a plastoquinol + NAD(+) + n H(+)(out). It catalyses the reaction a plastoquinone + NADPH + (n+1) H(+)(in) = a plastoquinol + NADP(+) + n H(+)(out). In terms of biological role, NDH shuttles electrons from NAD(P)H:plastoquinone, via FMN and iron-sulfur (Fe-S) centers, to quinones in the photosynthetic chain and possibly in a chloroplast respiratory chain. The immediate electron acceptor for the enzyme in this species is believed to be plastoquinone. Couples the redox reaction to proton translocation, and thus conserves the redox energy in a proton gradient. The chain is NAD(P)H-quinone oxidoreductase subunit 6, chloroplastic (ndhG) from Phaseolus vulgaris (Kidney bean).